The primary structure comprises 331 residues: Anthranilate phosphoribosyltransferase (331 aa).

5-phospho-alpha-D-ribose 1-diphosphate contacts are provided by residues glycine 79, 82-83 (GD), serine 87, 89-92 (NIST), 107-115 (KHCNGNISS), and serine 119. Glycine 79 is an anthranilate binding site. Position 91 (serine 91) interacts with Mg(2+). Asparagine 110 contacts anthranilate. Arginine 165 is an anthranilate binding site. Aspartate 223 and glutamate 224 together coordinate Mg(2+).

The protein belongs to the anthranilate phosphoribosyltransferase family. In terms of assembly, homodimer. Mg(2+) is required as a cofactor.

It catalyses the reaction N-(5-phospho-beta-D-ribosyl)anthranilate + diphosphate = 5-phospho-alpha-D-ribose 1-diphosphate + anthranilate. Its pathway is amino-acid biosynthesis; L-tryptophan biosynthesis; L-tryptophan from chorismate: step 2/5. Catalyzes the transfer of the phosphoribosyl group of 5-phosphorylribose-1-pyrophosphate (PRPP) to anthranilate to yield N-(5'-phosphoribosyl)-anthranilate (PRA). The sequence is that of Anthranilate phosphoribosyltransferase from Buchnera aphidicola subsp. Baizongia pistaciae (strain Bp).